The chain runs to 232 residues: Large ribosomal subunit protein uL1 (232 aa).

This sequence belongs to the universal ribosomal protein uL1 family. In terms of assembly, part of the 50S ribosomal subunit.

In terms of biological role, binds directly to 23S rRNA. The L1 stalk is quite mobile in the ribosome, and is involved in E site tRNA release. Protein L1 is also a translational repressor protein, it controls the translation of the L11 operon by binding to its mRNA. This chain is Large ribosomal subunit protein uL1, found in Bacillus velezensis (strain DSM 23117 / BGSC 10A6 / LMG 26770 / FZB42) (Bacillus amyloliquefaciens subsp. plantarum).